The primary structure comprises 172 residues: Small ribosomal subunit protein uS5 (172 aa).

Residues 17 to 80 enclose the S5 DRBM domain; sequence LREKMISVNR…EQARRNMFKV (64 aa).

The protein belongs to the universal ribosomal protein uS5 family. Part of the 30S ribosomal subunit. Contacts proteins S4 and S8.

In terms of biological role, with S4 and S12 plays an important role in translational accuracy. Located at the back of the 30S subunit body where it stabilizes the conformation of the head with respect to the body. The sequence is that of Small ribosomal subunit protein uS5 from Paraburkholderia phytofirmans (strain DSM 17436 / LMG 22146 / PsJN) (Burkholderia phytofirmans).